A 587-amino-acid polypeptide reads, in one-letter code: Solute carrier family 13 member 2 (587 aa).

The next 4 membrane-spanning stretches (helical) occupy residues 13–33, 53–73, 86–106, and 136–156; these read FYLI…IVQT, ALPL…MGIM, TNIL…WNLH, and SMWI…HAVL. The disordered stretch occupies residues 188–208; it reads KLDNGQPVSAPSEPRTQKTQE. 8 helical membrane passes run 264–284, 329–349, 367–387, 407–427, 445–465, 477–497, 506–526, and 535–555; these read FAFP…QVLF, VLFV…FPGW, TVAI…PGLM, TVND…FALA, PLQH…IAIF, LFLP…LYVM, LAFM…FGGL, and GFLL…SWSI.

It belongs to the SLC13A/DASS transporter (TC 2.A.47) family. NADC subfamily. Expressed in large and small intestine and in the kidney proximal tubules.

The protein localises to the apical cell membrane. It catalyses the reaction succinate(out) + 3 Na(+)(out) = succinate(in) + 3 Na(+)(in). The catalysed reaction is fumarate(out) + 3 Na(+)(out) = fumarate(in) + 3 Na(+)(in). The enzyme catalyses 2-oxoglutarate(out) + 3 Na(+)(out) = 2-oxoglutarate(in) + 3 Na(+)(in). Its activity is regulated as follows. Li(+) decreases succinate transport in the presence of Na(+), by competing at one of the three cation binding sites. Low-affinity sodium-dicarboxylate cotransporter, that mediates the entry of citric acid cycle intermediates, such as succinate, citrate, fumarate and alpha-ketoglutarate (2-oxoglutarate) into the small intestine and renal proximal tubule. Transports the dicarboxylate into the cell with a probable stoichiometry of 3 Na(+) for 1 divalent dicarboxylate, rendering the process electrogenic. Citrate is transported in protonated form as a divalent anion, rather than the trivalent form which is normally found in blood. Has a critical role in renal dicarboxylate transport. This is Solute carrier family 13 member 2 (Slc13a2) from Rattus norvegicus (Rat).